The primary structure comprises 224 residues: MSPTFNASPNQLTLALSKGRIFTETLPLLEAAGIRVTEDPETSRKLILPTSDPAVRVVIVRASDVPTYVQYGAADFGVAGKDVLMESGMAGLYAPIDLNIARCRMSVAVPAGFDYANAVRQGARLAVATKYVQTAREHFAKKGVHVDLIKLYGSMELGPLVGLSDAIVDLVSTGSTLRANNLVEVEEIVQISSRLVVNQAALKLKRERLAPILDAFERASAALA.

It belongs to the ATP phosphoribosyltransferase family. Short subfamily. In terms of assembly, heteromultimer composed of HisG and HisZ subunits.

The protein resides in the cytoplasm. It carries out the reaction 1-(5-phospho-beta-D-ribosyl)-ATP + diphosphate = 5-phospho-alpha-D-ribose 1-diphosphate + ATP. Its pathway is amino-acid biosynthesis; L-histidine biosynthesis; L-histidine from 5-phospho-alpha-D-ribose 1-diphosphate: step 1/9. Catalyzes the condensation of ATP and 5-phosphoribose 1-diphosphate to form N'-(5'-phosphoribosyl)-ATP (PR-ATP). Has a crucial role in the pathway because the rate of histidine biosynthesis seems to be controlled primarily by regulation of HisG enzymatic activity. This Cupriavidus necator (strain ATCC 17699 / DSM 428 / KCTC 22496 / NCIMB 10442 / H16 / Stanier 337) (Ralstonia eutropha) protein is ATP phosphoribosyltransferase.